Consider the following 425-residue polypeptide: Aspartic protease 2 (425 aa).

Residues 1–16 (MRSILVLVALIGCIAA) form the signal peptide. The Peptidase A1 domain maps to 72–421 (YLGEITIGTP…DIEKKRIGFA (350 aa)). Residue aspartate 90 is part of the active site. An intrachain disulfide couples cysteine 103 to cysteine 145. 3 N-linked (GlcNAc...) asparagine glycosylation sites follow: asparagine 163, asparagine 197, and asparagine 304. Residue aspartate 316 is part of the active site. An intrachain disulfide couples cysteine 351 to cysteine 382. N-linked (GlcNAc...) asparagine glycosylation is found at asparagine 354 and asparagine 365.

Belongs to the peptidase A1 family. In terms of processing, cleaved into a mature form. Expressed in intestine, amphidal glands and excretory gland (at protein level).

Its subcellular location is the secreted. With respect to regulation, inhibited by pepstatin A. Functionally, aspartic protease which cleaves several human serum proteins including hemoglobin, fibrinogen and albumin. Appears to cleave preferentially between P1 (Ala, Leu, Val, Phe and Gly) and P1' (Ala and Leu) residues. This Necator americanus (Human hookworm) protein is Aspartic protease 2.